A 217-amino-acid chain; its full sequence is MEKHTLEALVRSVVGKKRAVRRLRRQGFVPGVVYGPDVEPLSISIKRSNLIKLFHEVTEASIISLTVKDENGKEVFSHDVFIKNVQYDKLTDEVKHVDFYAPEKGHKMKINLPLEFVGKAKGEEKGGVLEIHHHELPVETLPNAVVEKLEIDVSNLDLGQALYVKDLKLPEGMEAELDEEEIIAIVSTPSGLEVEEETGEEESAEPEVIEKGKKEEE.

The tract at residues 187 to 217 (STPSGLEVEEETGEEESAEPEVIEKGKKEEE) is disordered. Residues 193–207 (EVEEETGEEESAEPE) show a composition bias toward acidic residues. Positions 208-217 (VIEKGKKEEE) are enriched in basic and acidic residues.

It belongs to the bacterial ribosomal protein bL25 family. CTC subfamily. In terms of assembly, part of the 50S ribosomal subunit; part of the 5S rRNA/L5/L18/L25 subcomplex. Contacts the 5S rRNA. Binds to the 5S rRNA independently of L5 and L18.

This is one of the proteins that binds to the 5S RNA in the ribosome where it forms part of the central protuberance. This is Large ribosomal subunit protein bL25 from Thermosipho africanus (strain TCF52B).